A 179-amino-acid polypeptide reads, in one-letter code: Inosine/xanthosine triphosphatase (179 aa).

A Mg(2+)-binding site is contributed by E71. 71 to 72 (EA) contributes to the substrate binding site.

This sequence belongs to the YjjX NTPase family. In terms of assembly, homodimer. Mg(2+) serves as cofactor. Mn(2+) is required as a cofactor.

It carries out the reaction XTP + H2O = XDP + phosphate + H(+). The enzyme catalyses ITP + H2O = IDP + phosphate + H(+). Functionally, phosphatase that hydrolyzes non-canonical purine nucleotides such as XTP and ITP to their respective diphosphate derivatives. Probably excludes non-canonical purines from DNA/RNA precursor pool, thus preventing their incorporation into DNA/RNA and avoiding chromosomal lesions. The sequence is that of Inosine/xanthosine triphosphatase from Shewanella oneidensis (strain ATCC 700550 / JCM 31522 / CIP 106686 / LMG 19005 / NCIMB 14063 / MR-1).